We begin with the raw amino-acid sequence, 357 residues long: Cinnamyl alcohol dehydrogenase 5 (357 aa).

Cys-47 lines the Zn(2+) pocket. Position 49 (Thr-49) interacts with NADP(+). The Zn(2+) site is built by His-69, Glu-70, Cys-100, Cys-103, Cys-106, Cys-114, and Cys-163. NADP(+) contacts are provided by residues Thr-167, 188–193 (GLGGVG), 211–216 (SSSNKK), Thr-251, Gly-275, and 298–300 (SFI).

The protein belongs to the zinc-containing alcohol dehydrogenase family. Homodimer. Requires Zn(2+) as cofactor. Expressed at the lateral root initiation sites, in the vascular tissues of the primary lateral root and the root caps. Expressed in the hypocotyl, cotyledon and leaf veins, apical meristem region, at the base of the trichomes, hydathodes and cauline leaves. In stems, expressed in the cells associated with the vascular cambium, interfascicular cambium and the developing xylem. Expressed in the vascular strand of petals and sepals, anthers, stamen filaments, stigma in flowers, and abscission, style and stigmatic regions of siliques.

It catalyses the reaction (E)-cinnamyl alcohol + NADP(+) = (E)-cinnamaldehyde + NADPH + H(+). The catalysed reaction is (E)-coniferol + NADP(+) = (E)-coniferaldehyde + NADPH + H(+). It carries out the reaction (E)-sinapyl alcohol + NADP(+) = (E)-sinapaldehyde + NADPH + H(+). The enzyme catalyses (E)-4-coumaroyl alcohol + NADP(+) = (E)-4-coumaraldehyde + NADPH + H(+). It catalyses the reaction (E)-caffeyl alcohol + NADP(+) = (E)-caffeyl aldehyde + NADPH + H(+). It participates in aromatic compound metabolism; phenylpropanoid biosynthesis. Functionally, involved in lignin biosynthesis in the floral stem. Catalyzes the final step specific for the production of lignin monomers. Catalyzes the NADPH-dependent reduction of coniferaldehyde, 5-hydroxyconiferaldehyde, sinapaldehyde, 4-coumaraldehyde and caffeyl aldehyde to their respective alcohols. The protein is Cinnamyl alcohol dehydrogenase 5 of Arabidopsis thaliana (Mouse-ear cress).